We begin with the raw amino-acid sequence, 419 residues long: Tyrosine--tRNA ligase (419 aa).

Tyr-34 contacts L-tyrosine. The 'HIGH' region signature appears at 39 to 48; it reads PSGDSMHIGH. Tyr-168 and Gln-172 together coordinate L-tyrosine. The short motif at 230 to 234 is the 'KMSKS' region element; the sequence is KFGKS. Lys-233 serves as a coordination point for ATP. An S4 RNA-binding domain is found at 352-418; it reads ANLVDWLVTL…GKKKYFLVSY (67 aa).

It belongs to the class-I aminoacyl-tRNA synthetase family. TyrS type 1 subfamily. Homodimer.

The protein resides in the cytoplasm. The catalysed reaction is tRNA(Tyr) + L-tyrosine + ATP = L-tyrosyl-tRNA(Tyr) + AMP + diphosphate + H(+). In terms of biological role, catalyzes the attachment of tyrosine to tRNA(Tyr) in a two-step reaction: tyrosine is first activated by ATP to form Tyr-AMP and then transferred to the acceptor end of tRNA(Tyr). In Listeria monocytogenes serovar 1/2a (strain ATCC BAA-679 / EGD-e), this protein is Tyrosine--tRNA ligase.